The primary structure comprises 614 residues: uncharacterized protein (614 aa).

The tract at residues 23–68 is disordered; that stretch reads YPIPSHNGDGESEKNSSDSTSSKVNAKVTSSLQGAPSTNDENSVSP. Over residues 49-68 the composition is skewed to polar residues; the sequence is KVTSSLQGAPSTNDENSVSP.

The protein to C.trachomatis CT875.

This is an uncharacterized protein from Chlamydia muridarum (strain MoPn / Nigg).